Reading from the N-terminus, the 108-residue chain is UPF0145 protein AF_0869 (108 aa).

Belongs to the UPF0145 family.

This Archaeoglobus fulgidus (strain ATCC 49558 / DSM 4304 / JCM 9628 / NBRC 100126 / VC-16) protein is UPF0145 protein AF_0869.